We begin with the raw amino-acid sequence, 305 residues long: Mycothiol acetyltransferase (305 aa).

2 N-acetyltransferase domains span residues 10–153 (DRLD…LVVP) and 156–305 (ISLR…YARA). Glu-38 serves as a coordination point for 1D-myo-inositol 2-(L-cysteinylamino)-2-deoxy-alpha-D-glucopyranoside. 82–84 (LAV) serves as a coordination point for acetyl-CoA. Residues Glu-183, Lys-225, and Glu-238 each contribute to the 1D-myo-inositol 2-(L-cysteinylamino)-2-deoxy-alpha-D-glucopyranoside site. Residues 242 to 244 (VAI) and 249 to 255 (QGRGLGR) contribute to the acetyl-CoA site. Residue Tyr-276 participates in 1D-myo-inositol 2-(L-cysteinylamino)-2-deoxy-alpha-D-glucopyranoside binding. 281 to 286 (NESALH) is an acetyl-CoA binding site.

Belongs to the acetyltransferase family. MshD subfamily. In terms of assembly, monomer.

It carries out the reaction 1D-myo-inositol 2-(L-cysteinylamino)-2-deoxy-alpha-D-glucopyranoside + acetyl-CoA = mycothiol + CoA + H(+). Functionally, catalyzes the transfer of acetyl from acetyl-CoA to desacetylmycothiol (Cys-GlcN-Ins) to form mycothiol. This is Mycothiol acetyltransferase from Rhodococcus jostii (strain RHA1).